Consider the following 464-residue polypeptide: ATP-dependent protease ATPase subunit HslU (464 aa).

ATP is bound by residues V19, 61-66 (GVGKTE), D278, E342, and R414.

This sequence belongs to the ClpX chaperone family. HslU subfamily. A double ring-shaped homohexamer of HslV is capped on each side by a ring-shaped HslU homohexamer. The assembly of the HslU/HslV complex is dependent on binding of ATP.

The protein localises to the cytoplasm. Functionally, ATPase subunit of a proteasome-like degradation complex; this subunit has chaperone activity. The binding of ATP and its subsequent hydrolysis by HslU are essential for unfolding of protein substrates subsequently hydrolyzed by HslV. HslU recognizes the N-terminal part of its protein substrates and unfolds these before they are guided to HslV for hydrolysis. The polypeptide is ATP-dependent protease ATPase subunit HslU (Halalkalibacterium halodurans (strain ATCC BAA-125 / DSM 18197 / FERM 7344 / JCM 9153 / C-125) (Bacillus halodurans)).